Consider the following 74-residue polypeptide: MEKKTVAALSFLFIVLFVAQEIAVTEAKTCENLSDSFKGPCIPDGNCNKHCKEKEHLLSGRCRDDFRCWCTRNC.

The N-terminal stretch at 1–27 (MEKKTVAALSFLFIVLFVAQEIAVTEA) is a signal peptide. 4 disulfide bridges follow: Cys30–Cys74, Cys41–Cys62, Cys47–Cys68, and Cys51–Cys70.

The protein localises to the secreted. Functionally, has antifungal activity against the phytopathogenic fungus A.niger VKM F-2259, but not against A.alternata VKM F-3047. Does not inhibit trypsin or chymotrypsin. This chain is Defensin Lc-def, found in Lens culinaris subsp. culinaris (Cultivated lentil).